The primary structure comprises 100 residues: NADH-quinone oxidoreductase subunit K (100 aa).

3 helical membrane passes run 2-22 (ITLT…LVGI), 29-49 (LMLF…LAAF), and 63-83 (FFII…LIIW).

The protein belongs to the complex I subunit 4L family. As to quaternary structure, NDH-1 is composed of 14 different subunits. Subunits NuoA, H, J, K, L, M, N constitute the membrane sector of the complex.

It localises to the cell inner membrane. It carries out the reaction a quinone + NADH + 5 H(+)(in) = a quinol + NAD(+) + 4 H(+)(out). In terms of biological role, NDH-1 shuttles electrons from NADH, via FMN and iron-sulfur (Fe-S) centers, to quinones in the respiratory chain. The immediate electron acceptor for the enzyme in this species is believed to be ubiquinone. Couples the redox reaction to proton translocation (for every two electrons transferred, four hydrogen ions are translocated across the cytoplasmic membrane), and thus conserves the redox energy in a proton gradient. This chain is NADH-quinone oxidoreductase subunit K, found in Nitratiruptor sp. (strain SB155-2).